A 347-amino-acid polypeptide reads, in one-letter code: GTPase Obg (347 aa).

The Obg domain occupies M1–I159. Residues A160–G328 form the OBG-type G domain. Residues G166 to S173, F191 to Q195, D213 to G216, N280 to D283, and S309 to I311 contribute to the GTP site. Mg(2+)-binding residues include S173 and T193.

The protein belongs to the TRAFAC class OBG-HflX-like GTPase superfamily. OBG GTPase family. As to quaternary structure, monomer. Mg(2+) is required as a cofactor.

The protein localises to the cytoplasm. Functionally, an essential GTPase which binds GTP, GDP and possibly (p)ppGpp with moderate affinity, with high nucleotide exchange rates and a fairly low GTP hydrolysis rate. Plays a role in control of the cell cycle, stress response, ribosome biogenesis and in those bacteria that undergo differentiation, in morphogenesis control. This chain is GTPase Obg, found in Synechococcus sp. (strain JA-2-3B'a(2-13)) (Cyanobacteria bacterium Yellowstone B-Prime).